The following is a 448-amino-acid chain: Glutamate--tRNA ligase 2 (448 aa).

The 'HIGH' region signature appears at 9–19 (PSPTGKLHIGN). Positions 240–244 (KISKR) match the 'KMSKS' region motif. Lysine 243 contributes to the ATP binding site.

It belongs to the class-I aminoacyl-tRNA synthetase family. Glutamate--tRNA ligase type 1 subfamily. Monomer.

The protein localises to the cytoplasm. It catalyses the reaction tRNA(Glu) + L-glutamate + ATP = L-glutamyl-tRNA(Glu) + AMP + diphosphate. Catalyzes the attachment of glutamate to tRNA(Glu) in a two-step reaction: glutamate is first activated by ATP to form Glu-AMP and then transferred to the acceptor end of tRNA(Glu). The polypeptide is Glutamate--tRNA ligase 2 (Orientia tsutsugamushi (strain Boryong) (Rickettsia tsutsugamushi)).